An 81-amino-acid polypeptide reads, in one-letter code: Dermaseptin-B7 (81 aa).

Positions 1–22 (MASLKKSLFLVLFLGLVSLSIC) are cleaved as a signal peptide. Residues 23-44 (EEEKRENEDEEEQEDDEQSEMK) constitute a propeptide that is removed on maturation. The interval 24–48 (EEKRENEDEEEQEDDEQSEMKRGLW) is disordered. Residues 30–40 (EDEEEQEDDEQ) show a composition bias toward acidic residues. Valine amide is present on Val-78. Residues 80–81 (EQ) constitute a propeptide that is removed on maturation.

The protein belongs to the frog skin active peptide (FSAP) family. Dermaseptin subfamily. Expressed by the skin glands.

It localises to the secreted. Functionally, has antimicrobial activity. The chain is Dermaseptin-B7 (DRG1) from Phyllomedusa bicolor (Two-colored leaf frog).